The following is a 301-amino-acid chain: Lycopene elongase/hydratase (301 aa).

Positions 1–20 (MSADMAAQSESGEGGDDGRA) are disordered. Transmembrane regions (helical) follow at residues 39 to 59 (FWLYLAGPVVVGVAAAASALA), 61 to 81 (LFGLEPVALFAYFLVPANVFL), 110 to 130 (PVNTVVVAASGLLGVGLFAVA), 133 to 153 (VAWPWLAAHFFLAVEYSAPPF), 160 to 180 (LLDSVSNGLYVLPGVAAYAAV), 186 to 206 (PMLAVAGAWLWTMGMHTFSAI), 229 to 249 (TYWYCAATWVLAAVAFAAVDL), 252 to 272 (GALLAAYPVVVLGIVAAGVDV), and 276 to 296 (YWWYPVINTVVGMLITLGALW).

This sequence belongs to the UbiA prenyltransferase family.

The protein localises to the cell membrane. The enzyme catalyses all-trans-lycopene + dimethylallyl diphosphate + H2O = dihydroisopentenyldehydrorhodopin + diphosphate. It catalyses the reaction isopentenyldehydrorhodopin + dimethylallyl diphosphate + H2O = dihydrobisanhydrobacterioruberin + diphosphate. It participates in carotenoid biosynthesis. In terms of biological role, involved in the biosynthesis of the acyclic C50 carotenoid bacterioruberin (BR). Acts as a bifunctional elongase/hydratase that catalyzes the elongation of lycopene by attaching a C(5) isoprene unit at C-2, as well as the hydroxylation of the previous end of the molecule. The enzyme acts at both ends of the substrate, and catalyzes the conversion of lycopene to the C(45) intermediate dihydroisopentenyldehydrorhodopin (DH-IDR) and the conversion of isopentenyldehydrorhodopin (IDR) to the C(50) carotenoid dihydrobisanhydrobacterioruberin (DH-BABR). Can also catalyze the conversion of lycopene to tetrahydrobisanhydrobacterioruberin (TH-BABR). The polypeptide is Lycopene elongase/hydratase (Haloferax volcanii (strain ATCC 29605 / DSM 3757 / JCM 8879 / NBRC 14742 / NCIMB 2012 / VKM B-1768 / DS2) (Halobacterium volcanii)).